A 435-amino-acid chain; its full sequence is U-box domain-containing protein 36 (435 aa).

Positions 227–345 form a coiled coil; it reads EAEASKRKAR…LKGKREEEEA (119 aa). One can recognise a U-box domain in the interval 352–426; it reads EPPQYFICPI…QEWLQLRELL (75 aa).

It catalyses the reaction S-ubiquitinyl-[E2 ubiquitin-conjugating enzyme]-L-cysteine + [acceptor protein]-L-lysine = [E2 ubiquitin-conjugating enzyme]-L-cysteine + N(6)-ubiquitinyl-[acceptor protein]-L-lysine.. The protein operates within protein modification; protein ubiquitination. Functions as an E3 ubiquitin ligase. The sequence is that of U-box domain-containing protein 36 (PUB36) from Arabidopsis thaliana (Mouse-ear cress).